The following is a 232-amino-acid chain: Enolase-phosphatase E1 (232 aa).

The protein belongs to the HAD-like hydrolase superfamily. MasA/MtnC family. Monomer. Mg(2+) serves as cofactor.

It carries out the reaction 5-methylsulfanyl-2,3-dioxopentyl phosphate + H2O = 1,2-dihydroxy-5-(methylsulfanyl)pent-1-en-3-one + phosphate. The protein operates within amino-acid biosynthesis; L-methionine biosynthesis via salvage pathway; L-methionine from S-methyl-5-thio-alpha-D-ribose 1-phosphate: step 3/6. Its pathway is amino-acid biosynthesis; L-methionine biosynthesis via salvage pathway; L-methionine from S-methyl-5-thio-alpha-D-ribose 1-phosphate: step 4/6. Functionally, bifunctional enzyme that catalyzes the enolization of 2,3-diketo-5-methylthiopentyl-1-phosphate (DK-MTP-1-P) into the intermediate 2-hydroxy-3-keto-5-methylthiopentenyl-1-phosphate (HK-MTPenyl-1-P), which is then dephosphorylated to form the acireductone 1,2-dihydroxy-3-keto-5-methylthiopentene (DHK-MTPene). The polypeptide is Enolase-phosphatase E1 (Xanthomonas campestris pv. campestris (strain 8004)).